We begin with the raw amino-acid sequence, 98 residues long: NADH-ubiquinone oxidoreductase chain 4L (98 aa).

2 helical membrane passes run 1–21 and 48–68; these read MTLIHFSFCSAFILGLTGLAL and PLHLTIYLSSMMLYIMLPFAA.

It belongs to the complex I subunit 4L family. As to quaternary structure, core subunit of respiratory chain NADH dehydrogenase (Complex I) which is composed of 45 different subunits.

Its subcellular location is the mitochondrion inner membrane. It carries out the reaction a ubiquinone + NADH + 5 H(+)(in) = a ubiquinol + NAD(+) + 4 H(+)(out). In terms of biological role, core subunit of the mitochondrial membrane respiratory chain NADH dehydrogenase (Complex I) which catalyzes electron transfer from NADH through the respiratory chain, using ubiquinone as an electron acceptor. Part of the enzyme membrane arm which is embedded in the lipid bilayer and involved in proton translocation. The protein is NADH-ubiquinone oxidoreductase chain 4L (mt-nd4l) of Xenopus laevis (African clawed frog).